A 265-amino-acid polypeptide reads, in one-letter code: NAD kinase 1 (265 aa).

The active-site Proton acceptor is Asp-45. NAD(+)-binding positions include 45–46 (DG), 122–123 (NE), Arg-148, Asp-150, and Ala-185.

It belongs to the NAD kinase family. A divalent metal cation is required as a cofactor.

The protein resides in the cytoplasm. The enzyme catalyses NAD(+) + ATP = ADP + NADP(+) + H(+). Functionally, involved in the regulation of the intracellular balance of NAD and NADP, and is a key enzyme in the biosynthesis of NADP. Catalyzes specifically the phosphorylation on 2'-hydroxyl of the adenosine moiety of NAD to yield NADP. This chain is NAD kinase 1, found in Bacillus anthracis.